A 378-amino-acid polypeptide reads, in one-letter code: Probable 3-hydroxyisobutyryl-CoA hydrolase 2 (378 aa).

Residues glycine 115, glutamate 138, and aspartate 146 each coordinate substrate. The Microbody targeting signal signature appears at 376–378 (AKL).

Belongs to the enoyl-CoA hydratase/isomerase family.

The protein resides in the peroxisome. The enzyme catalyses 3-hydroxy-2-methylpropanoyl-CoA + H2O = 3-hydroxy-2-methylpropanoate + CoA + H(+). It functions in the pathway amino-acid degradation; L-valine degradation. Its function is as follows. Involved in valine catabolism. The protein is Probable 3-hydroxyisobutyryl-CoA hydrolase 2 of Arabidopsis thaliana (Mouse-ear cress).